Consider the following 102-residue polypeptide: Neuropeptide F (102 aa).

Residues 1–29 form the signal peptide; that stretch reads MSNTMRCILIVCVALTLIAAGCNVEASNS. Positions 30 to 32 are excised as a propeptide; it reads RPP. At phenylalanine 62 the chain carries Phenylalanine amide. The propeptide occupies 66–102; that stretch reads GGPLMEMLRNRELENNMAKSINSGGELIRALDEEEVF.

It belongs to the NPY family.

The protein resides in the secreted. An integral part of the sensory system that mediates food signaling, providing the neural basis for the regulation of food response; coordinates larval foraging and social behavior changes during development. May have a hormonal role in females. The polypeptide is Neuropeptide F (Drosophila pseudoobscura pseudoobscura (Fruit fly)).